The primary structure comprises 488 residues: Glutamyl-tRNA(Gln) amidotransferase subunit A (488 aa).

Catalysis depends on charge relay system residues Lys-77 and Ser-152. Residue Ser-176 is the Acyl-ester intermediate of the active site.

It belongs to the amidase family. GatA subfamily. Heterotrimer of A, B and C subunits.

It carries out the reaction L-glutamyl-tRNA(Gln) + L-glutamine + ATP + H2O = L-glutaminyl-tRNA(Gln) + L-glutamate + ADP + phosphate + H(+). Allows the formation of correctly charged Gln-tRNA(Gln) through the transamidation of misacylated Glu-tRNA(Gln) in organisms which lack glutaminyl-tRNA synthetase. The reaction takes place in the presence of glutamine and ATP through an activated gamma-phospho-Glu-tRNA(Gln). The sequence is that of Glutamyl-tRNA(Gln) amidotransferase subunit A from Streptococcus pyogenes serotype M28 (strain MGAS6180).